Here is a 463-residue protein sequence, read N- to C-terminus: Glycine--tRNA ligase (463 aa).

Residues R98 and E170 each coordinate substrate. Residues R202–E204, F212–F217, E287–L288, and G331–R334 contribute to the ATP site. F217–E221 contributes to the substrate binding site. Residue E327–G331 participates in substrate binding.

Belongs to the class-II aminoacyl-tRNA synthetase family. As to quaternary structure, homodimer.

The protein localises to the cytoplasm. The catalysed reaction is tRNA(Gly) + glycine + ATP = glycyl-tRNA(Gly) + AMP + diphosphate. Its function is as follows. Catalyzes the attachment of glycine to tRNA(Gly). This chain is Glycine--tRNA ligase, found in Mycoplasmoides gallisepticum (strain R(low / passage 15 / clone 2)) (Mycoplasma gallisepticum).